A 458-amino-acid chain; its full sequence is UDP-N-acetylmuramate--L-alanine ligase (458 aa).

112-118 (GTHGKTT) is an ATP binding site.

The protein belongs to the MurCDEF family.

Its subcellular location is the cytoplasm. It carries out the reaction UDP-N-acetyl-alpha-D-muramate + L-alanine + ATP = UDP-N-acetyl-alpha-D-muramoyl-L-alanine + ADP + phosphate + H(+). Its pathway is cell wall biogenesis; peptidoglycan biosynthesis. Functionally, cell wall formation. This Syntrophotalea carbinolica (strain DSM 2380 / NBRC 103641 / GraBd1) (Pelobacter carbinolicus) protein is UDP-N-acetylmuramate--L-alanine ligase.